The following is a 461-amino-acid chain: Flavin-containing monooxygenase FMO GS-OX4 (461 aa).

17–22 (GAGAAG) is a binding site for FAD. 211–216 (GNFASG) lines the NADP(+) pocket.

This sequence belongs to the FMO family.

The enzyme catalyses a (Z)-omega-(methylsulfanyl)-N-sulfo-alkylhydroximate S-glucoside + NADPH + O2 + H(+) = a (Z)-omega-(methylsulfinyl)-alkyl-glucosinolate + NADP(+) + H2O. In terms of biological role, catalyzes the conversion of methylthioalkyl glucosinolates of any chain length into methylsulfinylalkyl glucosinolates. This chain is Flavin-containing monooxygenase FMO GS-OX4 (FMOGS-OX4), found in Arabidopsis thaliana (Mouse-ear cress).